Consider the following 89-residue polypeptide: Elongation factor 1-beta (89 aa).

The protein belongs to the EF-1-beta/EF-1-delta family.

Promotes the exchange of GDP for GTP in EF-1-alpha/GDP, thus allowing the regeneration of EF-1-alpha/GTP that could then be used to form the ternary complex EF-1-alpha/GTP/AAtRNA. The sequence is that of Elongation factor 1-beta from Methanocella arvoryzae (strain DSM 22066 / NBRC 105507 / MRE50).